A 242-amino-acid polypeptide reads, in one-letter code: 3-deoxy-manno-octulosonate cytidylyltransferase (242 aa).

This sequence belongs to the KdsB family.

It is found in the cytoplasm. The enzyme catalyses 3-deoxy-alpha-D-manno-oct-2-ulosonate + CTP = CMP-3-deoxy-beta-D-manno-octulosonate + diphosphate. It participates in nucleotide-sugar biosynthesis; CMP-3-deoxy-D-manno-octulosonate biosynthesis; CMP-3-deoxy-D-manno-octulosonate from 3-deoxy-D-manno-octulosonate and CTP: step 1/1. Its pathway is bacterial outer membrane biogenesis; lipopolysaccharide biosynthesis. In terms of biological role, activates KDO (a required 8-carbon sugar) for incorporation into bacterial lipopolysaccharide in Gram-negative bacteria. The chain is 3-deoxy-manno-octulosonate cytidylyltransferase from Anaeromyxobacter sp. (strain K).